The chain runs to 152 residues: Ribosomal RNA large subunit methyltransferase H (152 aa).

S-adenosyl-L-methionine is bound by residues Leu68, Gly100, and 119 to 124 (LGVMTW).

The protein belongs to the RNA methyltransferase RlmH family. In terms of assembly, homodimer.

It localises to the cytoplasm. The enzyme catalyses pseudouridine(1915) in 23S rRNA + S-adenosyl-L-methionine = N(3)-methylpseudouridine(1915) in 23S rRNA + S-adenosyl-L-homocysteine + H(+). In terms of biological role, specifically methylates the pseudouridine at position 1915 (m3Psi1915) in 23S rRNA. This chain is Ribosomal RNA large subunit methyltransferase H, found in Rhodospirillum rubrum (strain ATCC 11170 / ATH 1.1.1 / DSM 467 / LMG 4362 / NCIMB 8255 / S1).